A 183-amino-acid polypeptide reads, in one-letter code: Large ribosomal subunit protein uL5 (183 aa).

This sequence belongs to the universal ribosomal protein uL5 family. In terms of assembly, part of the 50S ribosomal subunit; part of the 5S rRNA/L5/L18/L25 subcomplex. Contacts the 5S rRNA and the P site tRNA. Forms a bridge to the 30S subunit in the 70S ribosome.

In terms of biological role, this is one of the proteins that bind and probably mediate the attachment of the 5S RNA into the large ribosomal subunit, where it forms part of the central protuberance. In the 70S ribosome it contacts protein S13 of the 30S subunit (bridge B1b), connecting the 2 subunits; this bridge is implicated in subunit movement. Contacts the P site tRNA; the 5S rRNA and some of its associated proteins might help stabilize positioning of ribosome-bound tRNAs. This Chlorobaculum tepidum (strain ATCC 49652 / DSM 12025 / NBRC 103806 / TLS) (Chlorobium tepidum) protein is Large ribosomal subunit protein uL5.